Here is a 234-residue protein sequence, read N- to C-terminus: MGAQWKVKHKEAAANAKGRTFGKLSKEIMIAARAGADPDMNSRLRLVVEQAKKASMPRETLERAIKKGAGLLGESVNFERLTYEGFAPHRVPVIVECLTDNINRTVSEIRVLFRKGQLGAAGSVSWDFLYQGMIEAVPTAPDADADEAAIEAGAQDCEPGEEGATLFLTEPTDMDAVCKALPQFGFAVQSAQLGYRPKSTVDGLSDEQMAEVEAFLEAIDNHDDVQNVYVGLAG.

This sequence belongs to the TACO1 family.

Its subcellular location is the cytoplasm. This Pseudomonas syringae pv. tomato (strain ATCC BAA-871 / DC3000) protein is Probable transcriptional regulatory protein PSPTO_3162.